A 358-amino-acid chain; its full sequence is MSNVSSINNKLAFISTKFYELITKRIPDKNIVISPPSIMLIVKMLLKASTDRSRNQLLDLLYMLPLDDDEDDDSNTDKILKELLSRTEYTSIFFIDHNKRIHDSYKKYVSKSNITSLVSGDVTVLCNKMSELNYNTEDMLSSIRKPPEASILFNIKYSDLWESPFSDNDSHKFFVTKYLTKVVPYIITSGMFGHMYCHEIKSNIINIPYLHNTYSMLLFFADTYKNFKYLEKHITPRILLSSKIGVSNMKYSEISVSIPKFSIQTQHNIKSVFVELGITDIFDENCSMKSVSPDKFSITSLFVKSQVDFINNKIVLGDQKKWEKISNNNYHINRPFIFVIKYNKTGSVVFMGKIKDPE.

The protein belongs to the serpin family. Poxviruses subfamily.

This is an uncharacterized protein from Fowlpox virus (strain NVSL) (FPV).